Reading from the N-terminus, the 882-residue chain is E3 ubiquitin-protein ligase SH3RF3 (882 aa).

Residues 18–42 (AQSEGDEDRPGERRRRRAAATAAGA) are disordered. Residues 57-98 (CSVCLERLDTTAKVLPCQHTFCRRCLESIVCSRHELRCPECR) form an RING-type zinc finger. Residues 124–159 (RPRAGTSPGGSPPARPIPGQSAAPTLAGGGGGAAGS) form a disordered region. SH3 domains follow at residues 194-253 (CLLP…CIQP) and 256-319 (HAPP…LNDS). The tract at residues 368–399 (RRVDGKKNTKKRHSFTALSVTHRSSQAASHRH) is disordered. Residues 369–439 (RVDGKKNTKK…APTQDVSSSA (71 aa)) are interaction with RAC1. The residue at position 400 (Ser-400) is a Phosphoserine. Residues 433 to 444 (QDVSSSAGSTPT) show a composition bias toward polar residues. The segment at 433–458 (QDVSSSAGSTPTAVPRAASVSGEQGT) is disordered. Positions 464-525 (LPLNVYLALY…PGNYVTPVSR (62 aa)) constitute an SH3 3 domain. 3 stretches are compositionally biased toward polar residues: residues 575 to 588 (PQAHAQHPTASPPT), 596 to 635 (AQPTASQARSTISTAAHSAAQAQDRPTATVSPLRTQNSPS), and 697 to 706 (LSTSSPTNTG). 2 disordered regions span residues 575–664 (PQAH…CPRP) and 693–747 (PIGV…PTHD). The span at 708 to 721 (KLDEKKSEKKEKKS) shows a compositional bias: basic and acidic residues. Ser-797 carries the phosphoserine modification. Residues 823–882 (LPRERYRVVVSYPPQSEAEIELKEGDIVFVHKKREDGWYKGTLQRNGRTGLFPGSFVESF) form the SH3 4 domain.

The protein belongs to the SH3RF family. As to quaternary structure, interacts (via SH3 domain 3) with PAK2. Interacts with RAC1 (GTP-bound form). In terms of processing, autoubiquitinated.

It catalyses the reaction S-ubiquitinyl-[E2 ubiquitin-conjugating enzyme]-L-cysteine + [acceptor protein]-L-lysine = [E2 ubiquitin-conjugating enzyme]-L-cysteine + N(6)-ubiquitinyl-[acceptor protein]-L-lysine.. It participates in protein modification; protein ubiquitination. In terms of biological role, has E3 ubiquitin-protein ligase activity. In Homo sapiens (Human), this protein is E3 ubiquitin-protein ligase SH3RF3 (SH3RF3).